We begin with the raw amino-acid sequence, 320 residues long: Ciliary microtubule inner protein 2A (320 aa).

Belongs to the CIMIP2 family. In terms of assembly, microtubule inner protein component of sperm flagellar doublet microtubules. As to expression, expressed in sperm.

The protein resides in the cytoplasm. It localises to the cytoskeleton. Its subcellular location is the flagellum axoneme. In terms of biological role, microtubule inner protein (MIP) part of the dynein-decorated doublet microtubules (DMTs) in flagellum axoneme. Binds to the intra-tubulin interfaces. The sequence is that of Ciliary microtubule inner protein 2A (CIMIP2A) from Bos taurus (Bovine).